We begin with the raw amino-acid sequence, 90 residues long: Small ribosomal subunit protein bS20 (90 aa).

The protein belongs to the bacterial ribosomal protein bS20 family.

Its function is as follows. Binds directly to 16S ribosomal RNA. In Roseiflexus sp. (strain RS-1), this protein is Small ribosomal subunit protein bS20.